We begin with the raw amino-acid sequence, 316 residues long: HPr kinase/phosphorylase (316 aa).

Residues histidine 143 and lysine 164 contribute to the active site. Position 158–165 (158–165 (GEAGSGKS)) interacts with ATP. Serine 165 provides a ligand contact to Mg(2+). The active-site Proton acceptor; for phosphorylation activity. Proton donor; for dephosphorylation activity is aspartate 182. The interval 206–215 (LEVRGLGVLN) is important for the catalytic mechanism of both phosphorylation and dephosphorylation. A Mg(2+)-binding site is contributed by glutamate 207. Arginine 251 is a catalytic residue. The important for the catalytic mechanism of dephosphorylation stretch occupies residues 272-277 (PVMPGR).

The protein belongs to the HPrK/P family. As to quaternary structure, homohexamer. Requires Mg(2+) as cofactor.

It catalyses the reaction [HPr protein]-L-serine + ATP = [HPr protein]-O-phospho-L-serine + ADP + H(+). The enzyme catalyses [HPr protein]-O-phospho-L-serine + phosphate + H(+) = [HPr protein]-L-serine + diphosphate. In terms of biological role, catalyzes the ATP- as well as the pyrophosphate-dependent phosphorylation of a specific serine residue in HPr, a phosphocarrier protein of the phosphoenolpyruvate-dependent sugar phosphotransferase system (PTS). HprK/P also catalyzes the pyrophosphate-producing, inorganic phosphate-dependent dephosphorylation (phosphorolysis) of seryl-phosphorylated HPr (P-Ser-HPr). In Stenotrophomonas maltophilia (strain K279a), this protein is HPr kinase/phosphorylase.